A 504-amino-acid polypeptide reads, in one-letter code: L-amino-acid oxidase (504 aa).

The first 18 residues, 1 to 18, serve as a signal peptide directing secretion; that stretch reads MNVFFMFSLLFLAALGSC. The cysteines at positions 28 and 191 are disulfide-linked. FAD contacts are provided by residues 61–62, 81–82, Arg-89, and 105–108; these read MS, EA, and GPMR. Arg-108 contributes to the substrate binding site. An N-linked (GlcNAc...) asparagine glycan is attached at Asn-190. His-241 contacts substrate. Residue Val-279 coordinates FAD. Cys-349 and Cys-430 form a disulfide bridge. Asn-379 carries N-linked (GlcNAc...) asparagine glycosylation. Tyr-390 serves as a coordination point for substrate. Residues Glu-475 and 482 to 487 contribute to the FAD site; that span reads GWIDST. 482-483 contributes to the substrate binding site; sequence GW.

The protein belongs to the flavin monoamine oxidase family. FIG1 subfamily. In terms of assembly, homodimer; non-covalently linked. Requires FAD as cofactor. As to expression, expressed by the venom gland.

Its subcellular location is the secreted. It carries out the reaction an L-alpha-amino acid + O2 + H2O = a 2-oxocarboxylate + H2O2 + NH4(+). It catalyses the reaction L-leucine + O2 + H2O = 4-methyl-2-oxopentanoate + H2O2 + NH4(+). Catalyzes an oxidative deamination of predominantly hydrophobic and aromatic L-amino acids, thus producing hydrogen peroxide that may contribute to the diverse toxic effects of this enzyme. Shows activity on L-Leu. Exhibits diverse biological activities, such as hemorrhage, hemolysis, edema, antibacterial and antiparasitic activities, as well as regulation of platelet aggregation. Its effect on platelets is controversial, since it either induces aggregation or inhibits agonist-induced aggregation. These different effects are probably due to different experimental conditions. This protein induces apoptosis of cultured HeLa cells. The protein is L-amino-acid oxidase of Gloydius halys (Chinese water mocassin).